Consider the following 922-residue polypeptide: Protein translocase subunit SecA (922 aa).

ATP contacts are provided by residues Q87, 105–109 (GEGKT), and D519. Residues 850–891 (HASRQMRSIQGNAQHNSMGSFSGSGHGMGPTALSARSRPENA) are disordered. Residues 854–865 (QMRSIQGNAQHN) show a composition bias toward polar residues. C906, C908, C917, and C918 together coordinate Zn(2+).

Belongs to the SecA family. Monomer and homodimer. Part of the essential Sec protein translocation apparatus which comprises SecA, SecYEG and auxiliary proteins SecDF. Other proteins may also be involved. It depends on Zn(2+) as a cofactor.

The protein localises to the cell inner membrane. The protein resides in the cytoplasm. The catalysed reaction is ATP + H2O + cellular proteinSide 1 = ADP + phosphate + cellular proteinSide 2.. Functionally, part of the Sec protein translocase complex. Interacts with the SecYEG preprotein conducting channel. Has a central role in coupling the hydrolysis of ATP to the transfer of proteins into and across the cell membrane, serving as an ATP-driven molecular motor driving the stepwise translocation of polypeptide chains across the membrane. This is Protein translocase subunit SecA from Treponema denticola (strain ATCC 35405 / DSM 14222 / CIP 103919 / JCM 8153 / KCTC 15104).